A 391-amino-acid chain; its full sequence is 3-ketoacyl-CoA thiolase (391 aa).

Cys-95 acts as the Acyl-thioester intermediate in catalysis. Active-site proton acceptor residues include His-347 and Cys-377.

This sequence belongs to the thiolase-like superfamily. Thiolase family. In terms of assembly, heterotetramer of two alpha chains (FadB) and two beta chains (FadA).

It is found in the cytoplasm. It carries out the reaction an acyl-CoA + acetyl-CoA = a 3-oxoacyl-CoA + CoA. It participates in lipid metabolism; fatty acid beta-oxidation. Catalyzes the final step of fatty acid oxidation in which acetyl-CoA is released and the CoA ester of a fatty acid two carbons shorter is formed. The sequence is that of 3-ketoacyl-CoA thiolase from Pseudomonas putida (strain ATCC 700007 / DSM 6899 / JCM 31910 / BCRC 17059 / LMG 24140 / F1).